Reading from the N-terminus, the 334-residue chain is Protein-glutamate methylesterase FrzG (334 aa).

Residues 147–334 (PYPLVAIAAS…AALMQWVDVC (188 aa)) enclose the CheB-type methylesterase domain. Active-site residues include Ser156, His183, and Asp276.

The enzyme catalyses [protein]-L-glutamate 5-O-methyl ester + H2O = L-glutamyl-[protein] + methanol + H(+). Its function is as follows. Probable methylesterase. Required for the normal aggregation of M.xanthus cells during fruiting body formation. It is also a component of a sensory transduction pathway that controls the frequency at which cells reverse their gliding direction. It may remove the methyl group from the gamma-glutamyl methyl ester residues in FrzCD. The chain is Protein-glutamate methylesterase FrzG (frzG) from Myxococcus xanthus.